The chain runs to 1021 residues: Ribosome quality control complex subunit 2 (1021 aa).

The stretch at 348–388 forms a coiled coil; the sequence is IEAQKLKKRAHDRLATAERRLESAKEDQARKLQSLQDAQAT. The disordered stretch occupies residues 457–484; sequence NPESVDNSDESSETSDDDLDDSDDDNKV. Over residues 462–480 the composition is skewed to acidic residues; sequence DNSDESSETSDDDLDDSDD. At Ser-478 the chain carries Phosphoserine. 2 coiled-coil regions span residues 507–546 and 698–727; these read NARK…DLKR and DEKS…LKME. Polar residues-rich tracts occupy residues 746–761 and 839–856; these read YNED…TTGS and ISSQ…TPTA. Disordered stretches follow at residues 746–801 and 832–905; these read YNED…TALE and HAAR…VESF. The segment covering 876-905 has biased composition (basic and acidic residues); the sequence is DQSRNSEAENEKGLSTEQRDEKKHAKVESF.

This sequence belongs to the NEMF family. In terms of assembly, component of the ribosome quality control complex (RQC), composed of the E3 ubiquitin ligase rkr1/ltn1, rqc1 and mtr1/rqc2, as well as cdc48 and its ubiquitin-binding cofactors associated with the 60S ribosomal subunit. RQC2 binds to the 40S-binding surface of tRNAs.

The protein localises to the cytoplasm. In terms of biological role, key component of the ribosome quality control complex (RQC), a ribosome-associated complex that mediates the extraction of incompletely synthesized nascent chains from stalled ribosomes as well as their ubiquitin-mediated proteasomal degradation. Thereby, frees 60S subunit ribosomes from the stalled translation complex and prevents the accumulation of nascent polypeptide chains that are potentially toxic for the cell. Within the RQC complex, mtr1/rqc2 specifically binds stalled 60S ribosomal subunits by recognizing an exposed, nascent chain-conjugated tRNA moiety and promotes the recruitment of rkr1/ltn1 to stalled 60S subunits. Following binding to stalled 60S ribosomal subunits, mtr1/rqc2 mediates CAT tailing by recruiting alanine- and threonine-charged tRNA to the A-site and directing the elongation of stalled nascent chains independently of mRNA or 40S subunits, leading to non-templated C-terminal Ala and Thr extensions (CAT tails). CAT tails promote the rkr1/ltn1-mediated ubiquitination of incompletely synthesized nascent polypeptides: CAT tailing facilitates rkr1/ltn1-dependent ubiquitination by exposing lysine residues that would otherwise remain buried in the ribosomal exit tunnel. Following ubiquitination, incompletely synthesized nascent polypeptides are recognized by CDC48 and degraded by the proteasome. CAT-tailed proteins tend to aggregate and sequester chaperones and can induce proteotoxic stress; their rkr1/ltn1-dependent ubiquitination and degradation is required to prevent proteotoxic stress. The polypeptide is Ribosome quality control complex subunit 2 (Schizosaccharomyces pombe (strain 972 / ATCC 24843) (Fission yeast)).